The chain runs to 361 residues: D-alanine--D-alanine ligase (361 aa).

Residues 134–344 enclose the ATP-grasp domain; the sequence is KLLLKSFDIP…FKDLVDNLID (211 aa). 167 to 222 is an ATP binding site; sequence KEVLGYPVIVKPAVLGSSIGINVAYSENQIESFIKEALKYDLTIVIEKFIEAREIE. Aspartate 297, glutamate 311, and asparagine 313 together coordinate Mg(2+).

It belongs to the D-alanine--D-alanine ligase family. It depends on Mg(2+) as a cofactor. Requires Mn(2+) as cofactor.

It localises to the cytoplasm. It catalyses the reaction 2 D-alanine + ATP = D-alanyl-D-alanine + ADP + phosphate + H(+). It functions in the pathway cell wall biogenesis; peptidoglycan biosynthesis. Its function is as follows. Cell wall formation. This Borreliella burgdorferi (strain ATCC 35210 / DSM 4680 / CIP 102532 / B31) (Borrelia burgdorferi) protein is D-alanine--D-alanine ligase.